We begin with the raw amino-acid sequence, 207 residues long: Na(+)-translocating ferredoxin:NAD(+) oxidoreductase complex subunit G (207 aa).

A helical membrane pass occupies residues 18 to 38; the sequence is GLILFVISAVAACALALTNYV. Thr185 bears the FMN phosphoryl threonine mark.

The protein belongs to the RnfG family. As to quaternary structure, the complex is composed of six subunits: RnfA, RnfB, RnfC, RnfD, RnfE and RnfG. FMN is required as a cofactor.

The protein localises to the cell membrane. The enzyme catalyses 2 reduced [2Fe-2S]-[ferredoxin] + Na(+)(in) + NAD(+) + H(+) = 2 oxidized [2Fe-2S]-[ferredoxin] + Na(+)(out) + NADH. In terms of biological role, part of a membrane-bound complex that couples electron transfer with translocation of ions across the membrane. Couples electron transfer from reduced ferredoxin to NAD(+) with electrogenic movement of Na(+) out of the cell. Involved in caffeate respiration. This is Na(+)-translocating ferredoxin:NAD(+) oxidoreductase complex subunit G from Acetobacterium woodii (strain ATCC 29683 / DSM 1030 / JCM 2381 / KCTC 1655 / WB1).